The sequence spans 650 residues: Chaperone protein HtpG (650 aa).

Residues 1–349 (MSKTVKKFET…SSDLPLNVSR (349 aa)) form an a; substrate-binding region. A b region spans residues 350–566 (EILQEDVQIK…EHGLNANMER (217 aa)). The c stretch occupies residues 567 to 650 (ILRAMNQTVP…VADGKAAAGE (84 aa)).

The protein belongs to the heat shock protein 90 family. Homodimer.

It localises to the cytoplasm. Its function is as follows. Molecular chaperone. Has ATPase activity. The polypeptide is Chaperone protein HtpG (Geobacter sulfurreducens (strain ATCC 51573 / DSM 12127 / PCA)).